Reading from the N-terminus, the 236-residue chain is Increased recombination centers protein 22-2 (236 aa).

A signal peptide spans 1–19; sequence MKFSAILTALTATIATVAG. At 20–161 the chain is on the lumenal side; that stretch reads YETSGKPHTV…AAVSFFDPRL (142 aa). A helical transmembrane segment spans residues 162–182; the sequence is IFLELVLLATFGGIAYFVYEI. Topologically, residues 183 to 236 are cytoplasmic; that stretch reads WGKQYLRGTAPVKVPVKKSGSPVAVKEASPVGSASGFDESWIPEAHLKKNKKKA.

The protein belongs to the IRC22 family.

It localises to the endoplasmic reticulum membrane. Is probably involved in a pathway contributing to genomic integrity. This is Increased recombination centers protein 22-2 (IRC22-2) from Candida tropicalis (strain ATCC MYA-3404 / T1) (Yeast).